A 454-amino-acid polypeptide reads, in one-letter code: Bifunctional protein GlmU (454 aa).

The segment at 1-226 (MSTTVIILAA…AFEVEGVNDR (226 aa)) is pyrophosphorylase. UDP-N-acetyl-alpha-D-glucosamine contacts are provided by residues 8–11 (LAAG), K22, Q73, 78–79 (GT), 100–102 (YGD), G137, E151, N166, and N224. D102 provides a ligand contact to Mg(2+). N224 is a binding site for Mg(2+). The interval 227–247 (LQLAALEREFQKQQAKELMQQ) is linker. The tract at residues 248–454 (GVTFADPARF…NYQRPQKLKK (207 aa)) is N-acetyltransferase. UDP-N-acetyl-alpha-D-glucosamine-binding residues include R330 and K348. The active-site Proton acceptor is the H360. UDP-N-acetyl-alpha-D-glucosamine contacts are provided by Y363 and N374. Acetyl-CoA-binding positions include A377, 383-384 (NY), S402, A420, and R437.

It in the N-terminal section; belongs to the N-acetylglucosamine-1-phosphate uridyltransferase family. In the C-terminal section; belongs to the transferase hexapeptide repeat family. As to quaternary structure, homotrimer. Requires Mg(2+) as cofactor.

Its subcellular location is the cytoplasm. It carries out the reaction alpha-D-glucosamine 1-phosphate + acetyl-CoA = N-acetyl-alpha-D-glucosamine 1-phosphate + CoA + H(+). The catalysed reaction is N-acetyl-alpha-D-glucosamine 1-phosphate + UTP + H(+) = UDP-N-acetyl-alpha-D-glucosamine + diphosphate. Its pathway is nucleotide-sugar biosynthesis; UDP-N-acetyl-alpha-D-glucosamine biosynthesis; N-acetyl-alpha-D-glucosamine 1-phosphate from alpha-D-glucosamine 6-phosphate (route II): step 2/2. It functions in the pathway nucleotide-sugar biosynthesis; UDP-N-acetyl-alpha-D-glucosamine biosynthesis; UDP-N-acetyl-alpha-D-glucosamine from N-acetyl-alpha-D-glucosamine 1-phosphate: step 1/1. It participates in bacterial outer membrane biogenesis; LPS lipid A biosynthesis. Functionally, catalyzes the last two sequential reactions in the de novo biosynthetic pathway for UDP-N-acetylglucosamine (UDP-GlcNAc). The C-terminal domain catalyzes the transfer of acetyl group from acetyl coenzyme A to glucosamine-1-phosphate (GlcN-1-P) to produce N-acetylglucosamine-1-phosphate (GlcNAc-1-P), which is converted into UDP-GlcNAc by the transfer of uridine 5-monophosphate (from uridine 5-triphosphate), a reaction catalyzed by the N-terminal domain. The polypeptide is Bifunctional protein GlmU (Acinetobacter baumannii (strain AYE)).